Consider the following 2474-residue polypeptide: Highly reducing polyketide synthase 40 (2474 aa).

One can recognise a Ketosynthase family 3 (KS3) domain in the interval 1–294; it reads MFKETEIQQR…GSNAHIIIDD (294 aa). Residues C42, H177, and H217 each act as for beta-ketoacyl synthase activity in the active site. Positions 459–798 constitute a Malonyl-CoA:ACP transacylase (MAT) domain; that stretch reads FVFTGQGAQW…GYESVLRRGT (340 aa). The tract at residues 864–998 is N-terminal hotdog fold; the sequence is HELLGAPVPD…GLVVTEYEQP (135 aa). Residues 864–1182 enclose the PKS/mFAS DH domain; the sequence is HELLGAPVPD…ITTVARSEGA (319 aa). H896 serves as the catalytic Proton acceptor; for dehydratase activity. A C-terminal hotdog fold region spans residues 1027-1182; that stretch reads KVETSFRQLY…ITTVARSEGA (156 aa). Catalysis depends on D1093, which acts as the Proton donor; for dehydratase activity. Residues 1232 to 1535 are methyltransferase (CMet) domain; sequence VEMMCFLYIK…DLHIYDFPDH (304 aa). In terms of domain architecture, Enoyl reductase (ER) spans 1770–2063; it reads GLLDSLQFQD…SGSHMGKLVL (294 aa). In terms of domain architecture, Ketoreductase (KR) spans 2087-2263; sequence ASYLLSGGLG…PGVAVDLGMI (177 aa). Residues 2385–2462 form the Carrier domain; sequence DAAKIVSAAI…ELAELAAKRS (78 aa). S2422 is modified (O-(pantetheine 4'-phosphoryl)serine).

Requires pantetheine 4'-phosphate as cofactor.

It functions in the pathway secondary metabolite biosynthesis. Its function is as follows. Highly reducing polyketide synthase; part of the gene cluster that mediates the biosynthesis of the gamma-pyrones fusapyrone (FPY) and deoxyfusapyrone (dFPY). FPY is an undecaketide and thus likely synthesized by the polyketide synthase FPY1 from acetyl-CoA functioning as starter unit and the addition of 10 malonyl-CoA extender units by successive Claisen-condensations. Next to this, FPY shares some rare features: C-glycosylated 4-deoxyglucose at C-3, a gem-dimethyl group at C-13, and an alpha-beta to beta-gamma double bond shift at C-20. During FPY biosynthesis mono-C-methyl groups are transferred to the tetra-, penta-, hexa- and heptaketide, while two C-methyl groups are transferred to the nonaketide, suggesting that the CMet domain is programmed to selectively catalyze two successive C-alpha-methylation reactions of the nonaketide, while other alpha-carbons are non- or mono-methylated only. While the origin of the 4'-deoxyglucose moiety remains opaque, its transfer to C-3 is most likely mediated by the C-glycosyltransferase FPY2. Next to this, the hydroxyl group present at C-33 and discriminating between FPY and dFPY, is likely to be installed by the cytochrome P450 monooxygenase FPY7. No putative function can be predicted for the remaining genes FPY3-FPY6. This is Highly reducing polyketide synthase 40 from Fusarium mangiferae (Mango malformation disease fungus).